A 1062-amino-acid chain; its full sequence is Integrin alpha-8 (1062 aa).

The N-terminal stretch at 1–35 (MSAGTHCGPPGNRAPPFARLCCVSAALGMLWSPAC) is a signal peptide. At 36 to 1010 (LAFNLDVDKL…ATPNVSFSIP (975 aa)) the chain is on the extracellular side. FG-GAP repeat units follow at residues 41 to 104 (DVDK…RSAQ), 121 to 182 (NGTK…AYAE), 187 to 239 (RNSN…IANY), 252 to 305 (KQTD…STDM), 306 to 371 (TFIQ…LLFQ), 372 to 430 (DPQV…GLHS), and 434 to 497 (QVLQ…LHPM). An N-linked (GlcNAc...) asparagine glycan is attached at Asn80. Cys95 and Cys105 are disulfide-bonded. Asn121 carries N-linked (GlcNAc...) asparagine glycosylation. Cysteines 149 and 170 form a disulfide. A glycan (N-linked (GlcNAc...) asparagine) is linked at Asn176. Cys186 and Cys199 form a disulfide bridge. A glycan (N-linked (GlcNAc...) asparagine) is linked at Asn238. Ca(2+) contacts are provided by Glu274, Thr276, Asp278, and Glu282. N-linked (GlcNAc...) asparagine glycosylation is found at Asn301 and Asn310. 9 residues coordinate Ca(2+): Asp328, Asn330, Asp332, Asp336, Asp394, Asn396, Asp398, Tyr400, and Asp402. The short motif at 454 to 456 (RGD) is the Cell attachment site element. Asp458, Asp460, Asn462, Tyr464, and Asp466 together coordinate Ca(2+). Asn503 carries N-linked (GlcNAc...) asparagine glycosylation. 2 disulfides stabilise this stretch: Cys506–Cys517 and Cys523–Cys579. N-linked (GlcNAc...) asparagine glycosylation is found at Asn600 and Asn604. 2 cysteine pairs are disulfide-bonded: Cys640-Cys646 and Cys712-Cys725. N-linked (GlcNAc...) asparagine glycans are attached at residues Asn718, Asn736, Asn752, Asn779, Asn895, and Asn922. Disulfide bonds link Cys866/Cys923 and Cys928/Cys933. Asn1004 carries an N-linked (GlcNAc...) asparagine glycan. The chain crosses the membrane as a helical span at residues 1011 to 1031 (LWVIILAILLGLLVLAILTLA). At 1032–1062 (LWKCGFFDRARPPQDEMTDREQLTSDKTPEA) the chain is on the cytoplasmic side.

It belongs to the integrin alpha chain family. As to quaternary structure, heterodimer of an alpha and a beta subunit. The alpha subunit is composed of a heavy and a light chain linked by a disulfide bond. Alpha-8 associates with beta-1. As to expression, in brain, expressed in deep cortex, hippocampal CA1, basolateral amygdala and striatum. In kidney, expressed in glomerular mesengium (at protein level).

The protein localises to the membrane. Its subcellular location is the cell membrane. In terms of biological role, integrin alpha-8/beta-1 functions in the genesis of kidney and probably of other organs by regulating the recruitment of mesenchymal cells into epithelial structures. It recognizes the sequence R-G-D in a wide array of ligands including TNC, FN1, SPP1 TGFB1, TGFB3 and VTN. NPNT is probably its functional ligand in kidney genesis. Neuronal receptor for TNC it mediates cell-cell interactions and regulates neurite outgrowth of sensory and motor neurons. The polypeptide is Integrin alpha-8 (Itga8) (Mus musculus (Mouse)).